Here is a 109-residue protein sequence, read N- to C-terminus: Large ribosomal subunit protein uL24 (109 aa).

It belongs to the universal ribosomal protein uL24 family. Part of the 50S ribosomal subunit.

Functionally, one of two assembly initiator proteins, it binds directly to the 5'-end of the 23S rRNA, where it nucleates assembly of the 50S subunit. Its function is as follows. One of the proteins that surrounds the polypeptide exit tunnel on the outside of the subunit. This is Large ribosomal subunit protein uL24 from Legionella pneumophila subsp. pneumophila (strain Philadelphia 1 / ATCC 33152 / DSM 7513).